The chain runs to 255 residues: Zinc-finger homeodomain protein 6 (255 aa).

The disordered stretch occupies residues 1–35; sequence MEFRGHDEPVDEMGVAYGRTPPSSSSSPAASASAG. Over residues 21-35 the composition is skewed to low complexity; sequence PPSSSSSPAASASAG. The segment at 45 to 93 adopts a ZF-HD dimerization-type; degenerate zinc-finger fold; sequence YHECLRNHAAAMGGHVVDGCREFMPMPGDAADALKCAACGCHRSFHRKD. A compositionally biased stretch (pro residues) spans 106–126; sequence PSPPTPRVPLLMPPPQPQPHP. Disordered stretches follow at residues 106 to 181 and 226 to 255; these read PSPP…KFTP and NNKS…QQQQ. Residues 139-153 show a composition bias toward low complexity; that stretch reads YHHTPSGSGGTTTES. Positions 172–235 form a DNA-binding region, homeobox; sequence RKRFRTKFTP…NNKSSIGSSS (64 aa). Low complexity predominate over residues 240 to 255; that stretch reads RRQPQEQQSQQQQQQQ.

As to quaternary structure, homo- and heterodimer with other ZFHD proteins.

Its subcellular location is the nucleus. Functionally, putative transcription factor. The polypeptide is Zinc-finger homeodomain protein 6 (ZHD6) (Oryza sativa subsp. japonica (Rice)).